A 617-amino-acid polypeptide reads, in one-letter code: MGPIDTSQRLARLRELMQERKVDVYIVPSEDSHQSEYIAHCDGRREFISGFTGSAGCAIVSMTKAALSTDGRYFNQAAKQLDNNWILLKRGFENMPTWQEWTAEQAEGGKVVGVDPSLITASDARNLSETIKKCGGSLLGVQENLVDLVWGTERPARPSEKVALHPIEFAGKSFEEKISDLRKELQKKKSAGFVISMLDEIAWLFNLRGNDIPYNPVFFAYAIITQSTADLYIDEEKLPAEVKNYLGDKVSLKPYSSIFEDAKVLGQSAQNKSDGEASAKPPQKFLISTRASWSLSLALGGEKNVEEVRSPITDAKAIKNEAELEGMRACHIRDGAALSEYFAWLENELVNKKTVLNEVDASDKLEQIRSKHQHFVGLSFDTISSTGPNAAVIHYKAERNNCSIIDPKAVYLCDSGAQYLDGTTDTTRTLHFGEPTEMEKKAYTLVLKGLISIDTAVFPKGTTGFALDAFARQYLWKEGLDYLHGTGHGVGSYLNVHEGPIGLGTRVQYSEVAIAPGNVISDEPGYYEDGVFGIRIENIIMAKEVKTTHKFGEKPWLGFEHVTMTPLCQKLINPSLLSDAEKKWVNDYHTEIWEKTSKYFENDELTRNWLKRETQPI.

4 residues coordinate Mn(2+): Asp414, Asp425, Glu523, and Glu537.

Belongs to the peptidase M24B family. The cofactor is Mn(2+).

It catalyses the reaction Release of any N-terminal amino acid, including proline, that is linked to proline, even from a dipeptide or tripeptide.. In terms of biological role, catalyzes the removal of a penultimate prolyl residue from the N-termini of peptides. The polypeptide is Probable Xaa-Pro aminopeptidase P (AMPP) (Ajellomyces capsulatus (strain G186AR / H82 / ATCC MYA-2454 / RMSCC 2432) (Darling's disease fungus)).